Consider the following 134-residue polypeptide: Early E3B 14.9 kDa protein (134 aa).

The first 19 residues, 1 to 19 (MQAMLPVILILLLPCIALA), serve as a signal peptide directing secretion. Residues 54–78 (YWIVIVGIINILSCTFFSITIYPTF) traverse the membrane as a helical segment.

It belongs to the adenoviridae E3_14 family. Phosphorylated on serine; O-glycosylated, but not N-glycosylated.

It localises to the host membrane. Its function is as follows. Down-regulates the EGF receptor and prevents cytolysis by TNF. The chain is Early E3B 14.9 kDa protein from Homo sapiens (Human).